Here is an 822-residue protein sequence, read N- to C-terminus: Serine/threonine-protein phosphatase 4 regulatory subunit 3 (822 aa).

Residues 1–100 form the WH1 domain; it reads MTDTRRRVKV…DEIWEKICQV (100 aa). Positions 744-822 are disordered; that stretch reads TSQLSASGHP…PLTKKARLGS (79 aa). A compositionally biased stretch (low complexity) spans 761 to 774; sequence SPGSPESPGSVSKS. A compositionally biased stretch (acidic residues) spans 793–808; the sequence is YPDDDEEDDDNDEEEK.

The protein belongs to the SMEK family. Serine/threonine-protein phosphatase 4 (PP4) occurs in different assemblies of the catalytic and one or more regulatory subunits.

Regulatory subunit of serine/threonine-protein phosphatase 4. The polypeptide is Serine/threonine-protein phosphatase 4 regulatory subunit 3 (smek1) (Xenopus laevis (African clawed frog)).